The primary structure comprises 451 residues: Amino-acid acetyltransferase (451 aa).

Residues 305–451 (EYLREATLDD…RRSMVLMKKL (147 aa)) enclose the N-acetyltransferase domain.

This sequence belongs to the acetyltransferase family. ArgA subfamily.

Its subcellular location is the cytoplasm. It catalyses the reaction L-glutamate + acetyl-CoA = N-acetyl-L-glutamate + CoA + H(+). It participates in amino-acid biosynthesis; L-arginine biosynthesis; N(2)-acetyl-L-ornithine from L-glutamate: step 1/4. This Ralstonia nicotianae (strain ATCC BAA-1114 / GMI1000) (Ralstonia solanacearum) protein is Amino-acid acetyltransferase (argA).